The sequence spans 381 residues: Putative 8-amino-7-oxononanoate synthase (381 aa).

Position 20 (Arg20) interacts with substrate. 107–108 (GY) is a binding site for pyridoxal 5'-phosphate. His132 lines the substrate pocket. Residues Ser180, 205-208 (DEAH), and 236-239 (TLSK) contribute to the pyridoxal 5'-phosphate site. Lys239 carries the N6-(pyridoxal phosphate)lysine modification. Thr351 contributes to the substrate binding site.

This sequence belongs to the class-II pyridoxal-phosphate-dependent aminotransferase family. BioF subfamily. As to quaternary structure, homodimer. It depends on pyridoxal 5'-phosphate as a cofactor.

The enzyme catalyses 6-carboxyhexanoyl-[ACP] + L-alanine + H(+) = (8S)-8-amino-7-oxononanoate + holo-[ACP] + CO2. It functions in the pathway cofactor biosynthesis; biotin biosynthesis. Functionally, catalyzes the decarboxylative condensation of pimeloyl-[acyl-carrier protein] and L-alanine to produce 8-amino-7-oxononanoate (AON), [acyl-carrier protein], and carbon dioxide. The protein is Putative 8-amino-7-oxononanoate synthase (bioF) of Rippkaea orientalis (strain PCC 8801 / RF-1) (Cyanothece sp. (strain PCC 8801)).